Here is a 507-residue protein sequence, read N- to C-terminus: Photosystem II CP47 reaction center protein (507 aa).

Residues 2-16 are Cytoplasmic-facing; sequence GLPWYRVHTVVLNDP. The chain crosses the membrane as a helical span at residues 17-39; that stretch reads GRLISVHLMHTALVAGWAGSMAL. Over 40–94 the chain is Lumenal, thylakoid; it reads YELAIFDSSDAVLNPMWRQGMFVLPFMARLGVTSSWNGWSVTGETGLDPGFWSFE. Residues 95 to 116 form a helical membrane-spanning segment; the sequence is GVAAAHIVLSGLLFLAAVWHWV. Residues 117-134 lie on the Cytoplasmic side of the membrane; that stretch reads FWDLELFVDPRTGESALD. A helical transmembrane segment spans residues 135–159; that stretch reads LPKMFGIHLFLSGLLCFGFGAFHLT. Residues 160 to 196 lie on the Lumenal, thylakoid side of the membrane; that stretch reads GVWGPGMWVSDPYGLTGHVQPVAPEWGPAGFNPFNPG. A helical transmembrane segment spans residues 197–218; sequence GVVAHHIAAGIVGIIAGLFHLT. At 219–233 the chain is on the cytoplasmic side; that stretch reads VRPPERLYKALRMGN. A helical transmembrane segment spans residues 234 to 255; it reads IETVLSSSIAAVFFAAFVVAGT. Residues 256–450 are Lumenal, thylakoid-facing; that stretch reads MWYGNATTPI…GVFRTSPRGW (195 aa). A helical transmembrane segment spans residues 451–474; it reads FTFGHAVFALLFFFGHIWHGSRTL. Residues 475 to 507 are Cytoplasmic-facing; that stretch reads FRDVFAGVDPGLEEQVEFGVFAKVGDLSTRKEA.

Belongs to the PsbB/PsbC family. PsbB subfamily. In terms of assembly, PSII is composed of 1 copy each of membrane proteins PsbA, PsbB, PsbC, PsbD, PsbE, PsbF, PsbH, PsbI, PsbJ, PsbK, PsbL, PsbM, PsbT, PsbX, Psb30/Ycf12, peripheral proteins PsbO, CyanoQ (PsbQ), PsbU, PsbV and a large number of cofactors. It forms dimeric complexes. Contacts PsbQ. It depends on Binds multiple chlorophylls. PSII binds additional chlorophylls, carotenoids and specific lipids. as a cofactor.

It localises to the cellular thylakoid membrane. One of the components of the core complex of photosystem II (PSII). It binds chlorophyll and helps catalyze the primary light-induced photochemical processes of PSII. PSII is a light-driven water:plastoquinone oxidoreductase, using light energy to abstract electrons from H(2)O, generating O(2) and a proton gradient subsequently used for ATP formation. The polypeptide is Photosystem II CP47 reaction center protein (Synechocystis sp. (strain ATCC 27184 / PCC 6803 / Kazusa)).